Here is a 274-residue protein sequence, read N- to C-terminus: Large ribosomal subunit protein uL2 (274 aa).

The segment at 223–274 (GIAMNPVDHPHGGGEGRSKGNHPVTPWGMPTKGYKTRKKKQSDKYIISRRKK) is disordered. The segment covering 230 to 240 (DHPHGGGEGRS) has biased composition (basic and acidic residues). The segment covering 256 to 274 (YKTRKKKQSDKYIISRRKK) has biased composition (basic residues).

This sequence belongs to the universal ribosomal protein uL2 family. As to quaternary structure, part of the 50S ribosomal subunit. Forms a bridge to the 30S subunit in the 70S ribosome.

One of the primary rRNA binding proteins. Required for association of the 30S and 50S subunits to form the 70S ribosome, for tRNA binding and peptide bond formation. It has been suggested to have peptidyltransferase activity; this is somewhat controversial. Makes several contacts with the 16S rRNA in the 70S ribosome. The polypeptide is Large ribosomal subunit protein uL2 (Nautilia profundicola (strain ATCC BAA-1463 / DSM 18972 / AmH)).